A 412-amino-acid chain; its full sequence is Gamma-glutamyl phosphate reductase (412 aa).

The protein belongs to the gamma-glutamyl phosphate reductase family.

It is found in the cytoplasm. It catalyses the reaction L-glutamate 5-semialdehyde + phosphate + NADP(+) = L-glutamyl 5-phosphate + NADPH + H(+). The protein operates within amino-acid biosynthesis; L-proline biosynthesis; L-glutamate 5-semialdehyde from L-glutamate: step 2/2. Catalyzes the NADPH-dependent reduction of L-glutamate 5-phosphate into L-glutamate 5-semialdehyde and phosphate. The product spontaneously undergoes cyclization to form 1-pyrroline-5-carboxylate. The protein is Gamma-glutamyl phosphate reductase of Actinobacillus pleuropneumoniae serotype 5b (strain L20).